The following is a 278-amino-acid chain: S-formylglutathione hydrolase YeiG (278 aa).

Catalysis depends on charge relay system residues serine 145, aspartate 223, and histidine 256.

Belongs to the esterase D family.

The enzyme catalyses S-formylglutathione + H2O = formate + glutathione + H(+). In terms of biological role, serine hydrolase involved in the detoxification of formaldehyde. Hydrolyzes S-formylglutathione to glutathione and formate. The protein is S-formylglutathione hydrolase YeiG (yeiG) of Escherichia coli O157:H7.